Here is a 367-residue protein sequence, read N- to C-terminus: tRNA pseudouridine synthase D (367 aa).

The active-site Nucleophile is D78. Residues 153–300 (GVPNYFGEQR…KQERRRIRLT (148 aa)) enclose the TRUD domain.

The protein belongs to the pseudouridine synthase TruD family.

It carries out the reaction uridine(13) in tRNA = pseudouridine(13) in tRNA. Its function is as follows. Responsible for synthesis of pseudouridine from uracil-13 in transfer RNAs. This chain is tRNA pseudouridine synthase D, found in Colwellia psychrerythraea (strain 34H / ATCC BAA-681) (Vibrio psychroerythus).